We begin with the raw amino-acid sequence, 423 residues long: Serine--tRNA ligase (423 aa).

2 stretches are compositionally biased toward basic and acidic residues: residues 1-24 (MIDL…RGED) and 62-71 (KMRDASPEEK). Residues 1–71 (MIDLKQLRDD…KMRDASPEEK (71 aa)) form a disordered region. Position 230 to 232 (230 to 232 (TSE)) interacts with L-serine. ATP is bound by residues 261–263 (RRE) and Val277. Residue Glu284 participates in L-serine binding. Position 348-351 (348-351 (ELTS)) interacts with ATP. Residue Thr383 participates in L-serine binding.

This sequence belongs to the class-II aminoacyl-tRNA synthetase family. Type-1 seryl-tRNA synthetase subfamily. As to quaternary structure, homodimer. The tRNA molecule binds across the dimer.

It is found in the cytoplasm. The enzyme catalyses tRNA(Ser) + L-serine + ATP = L-seryl-tRNA(Ser) + AMP + diphosphate + H(+). It carries out the reaction tRNA(Sec) + L-serine + ATP = L-seryl-tRNA(Sec) + AMP + diphosphate + H(+). The protein operates within aminoacyl-tRNA biosynthesis; selenocysteinyl-tRNA(Sec) biosynthesis; L-seryl-tRNA(Sec) from L-serine and tRNA(Sec): step 1/1. Functionally, catalyzes the attachment of serine to tRNA(Ser). Is also able to aminoacylate tRNA(Sec) with serine, to form the misacylated tRNA L-seryl-tRNA(Sec), which will be further converted into selenocysteinyl-tRNA(Sec). The protein is Serine--tRNA ligase of Corynebacterium kroppenstedtii (strain DSM 44385 / JCM 11950 / CIP 105744 / CCUG 35717).